Reading from the N-terminus, the 187-residue chain is Putative glutathione-dependent formaldehyde-activating enzyme (187 aa).

In terms of domain architecture, CENP-V/GFA spans 20–166 (FQGGVLKCKC…FESLGLESYD (147 aa)). Zn(2+) is bound by residues C27, C29, C48, C50, C53, C95, and C98.

Belongs to the Gfa family. Zn(2+) is required as a cofactor.

It carries out the reaction S-(hydroxymethyl)glutathione = glutathione + formaldehyde. Its pathway is one-carbon metabolism; formaldehyde degradation; formate from formaldehyde (glutathione route): step 1/3. Catalyzes the condensation of formaldehyde and glutathione to S-hydroxymethylglutathione. This is Putative glutathione-dependent formaldehyde-activating enzyme from Verticillium alfalfae (strain VaMs.102 / ATCC MYA-4576 / FGSC 10136) (Verticillium wilt of alfalfa).